Consider the following 89-residue polypeptide: Small ribosomal subunit protein uS15 (89 aa).

Belongs to the universal ribosomal protein uS15 family. Part of the 30S ribosomal subunit. Forms a bridge to the 50S subunit in the 70S ribosome, contacting the 23S rRNA.

Its function is as follows. One of the primary rRNA binding proteins, it binds directly to 16S rRNA where it helps nucleate assembly of the platform of the 30S subunit by binding and bridging several RNA helices of the 16S rRNA. Functionally, forms an intersubunit bridge (bridge B4) with the 23S rRNA of the 50S subunit in the ribosome. The chain is Small ribosomal subunit protein uS15 from Brevibacillus brevis (strain 47 / JCM 6285 / NBRC 100599).